The following is a 149-amino-acid chain: MRAVVQRVKRASVAVDGNAVGEIDKGLCILLGVANDDTEEDANYLCEKIVNLRIFEDETSKFNLSLKDIDGEVLVVSNFTVMGDARKGRRPNFMFAADKEKAERLYNYFVERLKGLAKKVECGIFQAHMEVEIVNDGPVTILLDSKKVF.

The Gly-cisPro motif, important for rejection of L-amino acids signature appears at 137-138 (GP).

The protein belongs to the DTD family. In terms of assembly, homodimer.

It is found in the cytoplasm. It catalyses the reaction glycyl-tRNA(Ala) + H2O = tRNA(Ala) + glycine + H(+). The catalysed reaction is a D-aminoacyl-tRNA + H2O = a tRNA + a D-alpha-amino acid + H(+). Functionally, an aminoacyl-tRNA editing enzyme that deacylates mischarged D-aminoacyl-tRNAs. Also deacylates mischarged glycyl-tRNA(Ala), protecting cells against glycine mischarging by AlaRS. Acts via tRNA-based rather than protein-based catalysis; rejects L-amino acids rather than detecting D-amino acids in the active site. By recycling D-aminoacyl-tRNA to D-amino acids and free tRNA molecules, this enzyme counteracts the toxicity associated with the formation of D-aminoacyl-tRNA entities in vivo and helps enforce protein L-homochirality. This is D-aminoacyl-tRNA deacylase from Caldicellulosiruptor saccharolyticus (strain ATCC 43494 / DSM 8903 / Tp8T 6331).